The primary structure comprises 222 residues: MKIFLDTANLESIKKFNDMGLLDGITTNPSLMSKEKGNPKDAMEEITKIIKGDVSLEVVSTDFSGMVDEGKRLRQYGDNVVVKVPMTPDGLKACKSLSSEGIPVNVTLVFSPNQALLAAKSGAKYVSPFIGRLDDIGQDGMNLIQDIKDIFKNYPHLKTEILVASVRHPMHVVEAAKIGADVVTLPPGVLDKMLQHPLTKIGLENFLKDWEKVKAENPDIKI.

Lysine 83 (schiff-base intermediate with substrate) is an active-site residue.

It belongs to the transaldolase family. Type 3B subfamily.

It localises to the cytoplasm. The catalysed reaction is D-sedoheptulose 7-phosphate + D-glyceraldehyde 3-phosphate = D-erythrose 4-phosphate + beta-D-fructose 6-phosphate. It functions in the pathway carbohydrate degradation; pentose phosphate pathway; D-glyceraldehyde 3-phosphate and beta-D-fructose 6-phosphate from D-ribose 5-phosphate and D-xylulose 5-phosphate (non-oxidative stage): step 2/3. Transaldolase is important for the balance of metabolites in the pentose-phosphate pathway. The protein is Probable transaldolase of Nitrosopumilus maritimus (strain SCM1).